The sequence spans 168 residues: Ribosome maturation factor RimM (168 aa).

Positions 97-168 constitute a PRC barrel domain; sequence PNEYYYYELL…RLVVKVPEWI (72 aa).

Belongs to the RimM family. Binds ribosomal protein uS19.

Its subcellular location is the cytoplasm. In terms of biological role, an accessory protein needed during the final step in the assembly of 30S ribosomal subunit, possibly for assembly of the head region. Essential for efficient processing of 16S rRNA. May be needed both before and after RbfA during the maturation of 16S rRNA. It has affinity for free ribosomal 30S subunits but not for 70S ribosomes. This chain is Ribosome maturation factor RimM, found in Pseudothermotoga lettingae (strain ATCC BAA-301 / DSM 14385 / NBRC 107922 / TMO) (Thermotoga lettingae).